A 120-amino-acid chain; its full sequence is Large ribosomal subunit protein uL18 (120 aa).

Belongs to the universal ribosomal protein uL18 family. Part of the 50S ribosomal subunit; part of the 5S rRNA/L5/L18/L25 subcomplex. Contacts the 5S and 23S rRNAs.

This is one of the proteins that bind and probably mediate the attachment of the 5S RNA into the large ribosomal subunit, where it forms part of the central protuberance. This Rhizobium johnstonii (strain DSM 114642 / LMG 32736 / 3841) (Rhizobium leguminosarum bv. viciae) protein is Large ribosomal subunit protein uL18.